Reading from the N-terminus, the 100-residue chain is Acylphosphatase (100 aa).

One can recognise an Acylphosphatase-like domain in the interval 14–100; that stretch reads RWRFFVEGKV…TGADWFEIRS (87 aa). Catalysis depends on residues Arg-29 and Asn-47.

The protein belongs to the acylphosphatase family.

It carries out the reaction an acyl phosphate + H2O = a carboxylate + phosphate + H(+). This chain is Acylphosphatase (acyP), found in Synechococcus sp. (strain WH7803).